We begin with the raw amino-acid sequence, 1693 residues long: uncharacterized protein (1693 aa).

WD repeat units follow at residues His-1008 to Ser-1042, Gly-1053 to Gln-1083, Gly-1094 to Asn-1124, Gly-1135 to Asp-1165, Gly-1176 to Asp-1206, Gly-1217 to Ser-1247, Gly-1258 to Thr-1288, Gly-1299 to Asp-1329, Gly-1340 to Thr-1370, Asp-1381 to Asn-1411, Gly-1422 to Asn-1452, His-1463 to Glu-1493, Gly-1504 to Asp-1534, Gly-1545 to Asp-1575, Gly-1586 to Asp-1616, and Gly-1627 to Pro-1657.

This is an uncharacterized protein from Synechocystis sp. (strain ATCC 27184 / PCC 6803 / Kazusa).